The following is a 293-amino-acid chain: HTH-type transcriptional regulator HdfR (293 aa).

In terms of domain architecture, HTH lysR-type spans 1-58 (MDTELLKTFLEVSRTRHFGRAAESLYLTQSAVSFRIRQLENQLGANLFTRHRNNIRLT). Residues 18-37 (FGRAAESLYLTQSAVSFRIR) constitute a DNA-binding region (H-T-H motif).

It belongs to the LysR transcriptional regulatory family.

Its function is as follows. Negatively regulates the transcription of the flagellar master operon flhDC by binding to the upstream region of the operon. This is HTH-type transcriptional regulator HdfR from Yersinia enterocolitica serotype O:8 / biotype 1B (strain NCTC 13174 / 8081).